A 270-amino-acid chain; its full sequence is Type II restriction enzyme CeqI (270 aa).

It carries out the reaction Endonucleolytic cleavage of DNA to give specific double-stranded fragments with terminal 5'-phosphates.. In terms of biological role, a P subtype restriction enzyme that recognizes the double-stranded sequence 5'-GATATC-3' and cleaves after T-3. The protein is Type II restriction enzyme CeqI (ceqIR) of Rhodococcus hoagii (Corynebacterium equii).